A 543-amino-acid chain; its full sequence is Chaperonin GroEL (543 aa).

Residues 30–33 (TLGP), lysine 51, 87–91 (DGTTT), glycine 415, and aspartate 496 each bind ATP.

The protein belongs to the chaperonin (HSP60) family. As to quaternary structure, forms a cylinder of 14 subunits composed of two heptameric rings stacked back-to-back. Interacts with the co-chaperonin GroES.

The protein resides in the cytoplasm. It catalyses the reaction ATP + H2O + a folded polypeptide = ADP + phosphate + an unfolded polypeptide.. Together with its co-chaperonin GroES, plays an essential role in assisting protein folding. The GroEL-GroES system forms a nano-cage that allows encapsulation of the non-native substrate proteins and provides a physical environment optimized to promote and accelerate protein folding. The chain is Chaperonin GroEL from Gluconobacter oxydans (strain 621H) (Gluconobacter suboxydans).